Here is a 400-residue protein sequence, read N- to C-terminus: CinA-like protein (400 aa).

It belongs to the CinA family.

This chain is CinA-like protein, found in Escherichia coli (strain SMS-3-5 / SECEC).